A 357-amino-acid chain; its full sequence is Prostaglandin D2 receptor-like (357 aa).

Residues 1–20 lie on the Extracellular side of the membrane; that stretch reads MNESYRCQAATWVERGSSAT. An N-linked (GlcNAc...) asparagine glycan is attached at asparagine 2. The chain crosses the membrane as a helical span at residues 21–41; that stretch reads MGGVLFSAGLLGNLLALVLLA. The Cytoplasmic portion of the chain corresponds to 42–57; that stretch reads RSGLGSCRPGPLHPPP. Residues 58–78 form a helical membrane-spanning segment; it reads SVFYVLVCGLTVTHLLGKCLI. Residues 79 to 106 lie on the Extracellular side of the membrane; sequence SPMVLAAYAQNRSLKELLPASGNQLCEA. Residue asparagine 89 is glycosylated (N-linked (GlcNAc...) asparagine). A disulfide bridge links cysteine 104 with cysteine 182. Residues 107–127 form a helical membrane-spanning segment; sequence FAFLMSFFGLASTLQLLAMAL. The Cytoplasmic portion of the chain corresponds to 128-149; it reads ECWLSLGHPFFYQRHITARRGV. A helical membrane pass occupies residues 150 to 170; sequence LVAPVAGAFSLAFCALPFAGF. Topologically, residues 171–194 are extracellular; it reads GKFVQYCPGTWCFIQMIHKKRSFS. Residues 195 to 215 form a helical membrane-spanning segment; it reads VIGFSVLYSSLMALLVLATVV. Over 216–261 the chain is Cytoplasmic; the sequence is CNLGAMSNLYAMHRRQRHHPRRCSRDRAQSGSDYRHGSPNPLEELD. The chain crosses the membrane as a helical span at residues 262–282; it reads HFVLLALTTVLFTMCSLPLIY. Over 283–306 the chain is Extracellular; sequence RAYYGAFKLVDRADGDSEDLQALR. The helical transmembrane segment at 307–327 threads the bilayer; it reads FLSVISIVDPWIFIIFRTSVF. Residues 328-357 lie on the Cytoplasmic side of the membrane; that stretch reads RMLFHKAFTRPLIYRNWCSHSWQTNMESTL.

It belongs to the G-protein coupled receptor 1 family. In terms of tissue distribution, strongly expressed in eye and gastrointestinal tract (GIT), moderately in the brain and oviduct and weakly in the epididymis. In the eye, expressed in the epithelium of the iris and ciliary body and in photoreceptor cells of the retina. In the brain, expressed in leptomeninges, choroid plexus and spinal cord (sensory and motor neurons of the dorsal and ventral horns). In the stomach, expressed in the mucous-secreting goblet cells and the columnar epithelium. Expressed in platelets.

Its subcellular location is the cell membrane. Its function is as follows. Receptor for prostaglandin D2 (PGD2). The activity of this receptor is mainly mediated by G(s) proteins that stimulate adenylate cyclase, resulting in an elevation of intracellular cAMP. A mobilization of calcium is also observed, but without formation of inositol 1,4,5-trisphosphate. This Rattus norvegicus (Rat) protein is Prostaglandin D2 receptor-like (Ptgdrl).